The primary structure comprises 271 residues: Mannosyl-3-phosphoglycerate phosphatase (271 aa).

The Nucleophile role is filled by D13. D13, D15, and D214 together coordinate Mg(2+).

It belongs to the HAD-like hydrolase superfamily. MPGP family. Mg(2+) serves as cofactor.

It localises to the cytoplasm. The enzyme catalyses 2-O-(alpha-D-mannosyl)-3-phosphoglycerate + H2O = (2R)-2-O-(alpha-D-mannosyl)-glycerate + phosphate. This is Mannosyl-3-phosphoglycerate phosphatase (yedP) from Shigella boydii serotype 4 (strain Sb227).